The primary structure comprises 400 residues: Probable glycosyltransferase WbjE (400 aa).

This sequence belongs to the glycosyltransferase group 1 family. Glycosyltransferase 4 subfamily.

It participates in bacterial outer membrane biogenesis; LPS O-antigen biosynthesis. The polypeptide is Probable glycosyltransferase WbjE (wbjE) (Pseudomonas aeruginosa).